The primary structure comprises 468 residues: Immunoglobulin superfamily member 21 (468 aa).

Residues 1–24 (MQAAPSLRRASCLLLAAILDLARG) form the signal peptide. An Ig-like 1 domain is found at 25-132 (YLTVNIEPLP…RATREKVVLA (108 aa)). A disulfide bond links Cys-46 and Cys-116. Residues Asn-82, Asn-165, and Asn-407 are each glycosylated (N-linked (GlcNAc...) asparagine). The Ig-like 2 domain maps to 344–429 (PKIMMTPSRA…GSTDTHTRLI (86 aa)).

As to quaternary structure, interacts (Ig-like 1 domain) with NRXN2 (via Laminin G-like 1 domain) in a trans-interaction manner. Expressed in brain (at protein levels). Highly expressed in the pyramidal cell layer of the dorsal and ventral hippocampal CA1 and CA3 regions, layers 5 and 6 of the cortex, the thalamus and the pons and weakly expressed in the cerebellum. Expressed in neurons but not in glia.

The protein resides in the postsynaptic cell membrane. Functionally, involved in synaptic inhibition in the brain. Selectively regulates inhibitory presynaptic differentiation through interacting with presynaptic NRXN2. The protein is Immunoglobulin superfamily member 21 (Igsf21) of Mus musculus (Mouse).